The chain runs to 428 residues: Histidine--tRNA ligase (428 aa).

Belongs to the class-II aminoacyl-tRNA synthetase family. Homodimer.

The protein localises to the cytoplasm. It catalyses the reaction tRNA(His) + L-histidine + ATP = L-histidyl-tRNA(His) + AMP + diphosphate + H(+). This is Histidine--tRNA ligase from Mesomycoplasma hyopneumoniae (strain J / ATCC 25934 / NCTC 10110) (Mycoplasma hyopneumoniae).